Reading from the N-terminus, the 732-residue chain is Catalase-peroxidase (732 aa).

The segment at 1–23 (MSEQSRCPVTGRTADSPATGSGL) is disordered. Residues 97-220 (WHSAGTYRTS…LAAVQMGLIY (124 aa)) constitute a cross-link (tryptophyl-tyrosyl-methioninium (Trp-Tyr) (with M-246)). H98 acts as the Proton acceptor in catalysis. Residues 220–246 (YVNPEGPDGKPDPVAAGRDIRETFARM) constitute a cross-link (tryptophyl-tyrosyl-methioninium (Tyr-Met) (with W-97)). H261 provides a ligand contact to heme b.

Belongs to the peroxidase family. Peroxidase/catalase subfamily. Homodimer or homotetramer. Heme b serves as cofactor. Formation of the three residue Trp-Tyr-Met cross-link is important for the catalase, but not the peroxidase activity of the enzyme.

It carries out the reaction H2O2 + AH2 = A + 2 H2O. It catalyses the reaction 2 H2O2 = O2 + 2 H2O. Its function is as follows. Bifunctional enzyme with both catalase and broad-spectrum peroxidase activity. The protein is Catalase-peroxidase of Prosthecochloris aestuarii (strain DSM 271 / SK 413).